The chain runs to 91 residues: Beta-microseminoprotein (91 aa).

5 cysteine pairs are disulfide-bonded: Cys-2–Cys-54, Cys-22–Cys-46, Cys-41–Cys-75, Cys-44–Cys-53, and Cys-68–Cys-88.

In terms of tissue distribution, expressed in ciliated epithelium of nidamental gland and in secretory-like cells in accessory nidamental gland (at protein level). Expressed in ovary, nidamental gland and accessory nidamental gland.

The protein resides in the secreted. Functionally, acts as a pheromone. Triggers aggressive behaviors in males such as fin beating, lunging and grabbing. These behaviors form part of the competition for fertile females. The chain is Beta-microseminoprotein from Doryteuthis pealeii (Longfin inshore squid).